Consider the following 195-residue polypeptide: Putative NADH dehydrogenase/NAD(P)H nitroreductase RSc1004 (195 aa).

Belongs to the nitroreductase family. HadB/RutE subfamily. FMN serves as cofactor.

This Ralstonia nicotianae (strain ATCC BAA-1114 / GMI1000) (Ralstonia solanacearum) protein is Putative NADH dehydrogenase/NAD(P)H nitroreductase RSc1004.